Consider the following 85-residue polypeptide: Cysteine-rich venom protein 1 (85 aa).

The signal sequence occupies residues 1–21; that stretch reads MCRYALIVLVVVVVATNLSEA. Cystine bridges form between cysteine 29–cysteine 63, cysteine 38–cysteine 59, cysteine 42–cysteine 53, cysteine 46–cysteine 84, and cysteine 65–cysteine 78. The 56-residue stretch at 29-84 folds into the TIL domain; the sequence is CEPNRIYKTCGPACPPTCEDPDPDCNETPQCKAGCFCIPGLIENMKGGNCISPSLC.

It belongs to the serine protease inhibitor-like (TIL domain-containing) family. Expressed by the venom gland.

The protein resides in the secreted. May be a phenoloxidase inhibitor that stabilizes or inhibits venom phenoloxidase while it is stored in the venom sac. In Pimpla hypochondriaca (Parasitoid wasp), this protein is Cysteine-rich venom protein 1.